The following is a 143-amino-acid chain: Methylglyoxal synthase (143 aa).

An MGS-like domain is found at 1–143; it reads MTVKKIALVA…DYEAYRNRII (143 aa). Residues H11, K15, 37 to 40, and 57 to 58 each bind substrate; these read TGST and SG. D63 serves as the catalytic Proton donor/acceptor. H90 lines the substrate pocket.

Belongs to the methylglyoxal synthase family.

The catalysed reaction is dihydroxyacetone phosphate = methylglyoxal + phosphate. In terms of biological role, catalyzes the formation of methylglyoxal from dihydroxyacetone phosphate. This chain is Methylglyoxal synthase, found in Coxiella burnetii (strain Dugway 5J108-111).